The chain runs to 241 residues: Deoxyribose-phosphate aldolase (241 aa).

The active-site Proton donor/acceptor is the Asp-95. The Schiff-base intermediate with acetaldehyde role is filled by Lys-159. The Proton donor/acceptor role is filled by Lys-188.

The protein belongs to the DeoC/FbaB aldolase family. DeoC type 1 subfamily.

The protein localises to the cytoplasm. It catalyses the reaction 2-deoxy-D-ribose 5-phosphate = D-glyceraldehyde 3-phosphate + acetaldehyde. Its pathway is carbohydrate degradation; 2-deoxy-D-ribose 1-phosphate degradation; D-glyceraldehyde 3-phosphate and acetaldehyde from 2-deoxy-alpha-D-ribose 1-phosphate: step 2/2. Functionally, catalyzes a reversible aldol reaction between acetaldehyde and D-glyceraldehyde 3-phosphate to generate 2-deoxy-D-ribose 5-phosphate. This Rhodopirellula baltica (strain DSM 10527 / NCIMB 13988 / SH1) protein is Deoxyribose-phosphate aldolase.